We begin with the raw amino-acid sequence, 307 residues long: Ras-related protein Rab-33 (307 aa).

The interval 19 to 80 (VIDPPKHVTA…IPPAPEAVTA (62 aa)) is disordered. Pro residues-rich tracts occupy residues 42–56 (PTHP…PAVP) and 65–75 (PTAPPPIPPAP). GTP is bound at residue 107 to 114 (GNAAVGKT). An Effector region motif is present at residues 129 to 137 (TEATIGVDF). GTP is bound by residues 155-159 (DTAGQ) and 217-220 (NKCD). 2 S-geranylgeranyl cysteine lipidation sites follow: cysteine 306 and cysteine 307.

The protein belongs to the small GTPase superfamily. Rab family.

The protein resides in the cell membrane. This Caenorhabditis elegans protein is Ras-related protein Rab-33 (rab-33).